A 654-amino-acid polypeptide reads, in one-letter code: Biotin-dependent 3-methylcrotonyl-coenzyme A carboxylase alpha1 subunit (654 aa).

One can recognise a Biotin carboxylation domain in the interval 1-448 (MFDTVLVANR…DTAVLDERSA (448 aa)). Residues 120 to 319 (KNAVAAFDVP…LVEWQLRVGA (200 aa)) form the ATP-grasp domain. 148–209 (AAEVGYPVLI…ERFVLRPRHI (62 aa)) provides a ligand contact to ATP. Glu275, Glu290, and Asn292 together coordinate Mg(2+). Positions 275, 290, and 292 each coordinate Mn(2+). Residues 578–653 (HRAVGARPAE…KVEQVLARIK (76 aa)) form the Biotinyl-binding domain. Lys620 carries the N6-biotinyllysine modification.

In terms of assembly, the biotin-dependent acyl-CoA carboxylase complex is composed of AccA1, which contains the biotin carboxylase (BC) and biotin carboxyl carrier protein (BCCP) domains, and AccD1, which contains the carboxyl transferase (CT) domain. The AccA1/AccD1 complex forms a dodecamer. Mg(2+) is required as a cofactor. It depends on Mn(2+) as a cofactor. Requires biotin as cofactor.

It catalyses the reaction N(6)-biotinyl-L-lysyl-[protein] + hydrogencarbonate + ATP = N(6)-carboxybiotinyl-L-lysyl-[protein] + ADP + phosphate + H(+). The protein operates within amino-acid degradation; L-leucine degradation. Functionally, component of a biotin-dependent acyl-CoA carboxylase complex. This subunit catalyzes the ATP-dependent carboxylation of the biotin carried by the biotin carboxyl carrier (BCC) domain, resulting in the formation of carboxyl biotin. When associated with the beta1 subunit AccD1, is involved in branched amino-acid catabolism with methylcrotonyl coenzyme A as the substrate. This Mycobacterium bovis (strain ATCC BAA-935 / AF2122/97) protein is Biotin-dependent 3-methylcrotonyl-coenzyme A carboxylase alpha1 subunit (accA1).